We begin with the raw amino-acid sequence, 270 residues long: Formamidopyrimidine-DNA glycosylase (270 aa).

Residue proline 2 is the Schiff-base intermediate with DNA of the active site. The active-site Proton donor is glutamate 3. Lysine 57 functions as the Proton donor; for beta-elimination activity in the catalytic mechanism. Positions 90, 109, and 150 each coordinate DNA. The FPG-type zinc finger occupies 235–269 (LVYGNKDKPCPRCGTKIKSIIIGQRNSFFCPQCQK). The active-site Proton donor; for delta-elimination activity is arginine 259.

This sequence belongs to the FPG family. As to quaternary structure, monomer. The cofactor is Zn(2+).

The enzyme catalyses Hydrolysis of DNA containing ring-opened 7-methylguanine residues, releasing 2,6-diamino-4-hydroxy-5-(N-methyl)formamidopyrimidine.. The catalysed reaction is 2'-deoxyribonucleotide-(2'-deoxyribose 5'-phosphate)-2'-deoxyribonucleotide-DNA = a 3'-end 2'-deoxyribonucleotide-(2,3-dehydro-2,3-deoxyribose 5'-phosphate)-DNA + a 5'-end 5'-phospho-2'-deoxyribonucleoside-DNA + H(+). Its function is as follows. Involved in base excision repair of DNA damaged by oxidation or by mutagenic agents. Acts as a DNA glycosylase that recognizes and removes damaged bases. Has a preference for oxidized purines, such as 7,8-dihydro-8-oxoguanine (8-oxoG). Has AP (apurinic/apyrimidinic) lyase activity and introduces nicks in the DNA strand. Cleaves the DNA backbone by beta-delta elimination to generate a single-strand break at the site of the removed base with both 3'- and 5'-phosphates. The chain is Formamidopyrimidine-DNA glycosylase from Histophilus somni (strain 129Pt) (Haemophilus somnus).